Consider the following 487-residue polypeptide: Protein nucleotidyltransferase YdiU (487 aa).

Positions 90, 92, 93, 113, 125, 126, 176, and 183 each coordinate ATP. Asp-252 acts as the Proton acceptor in catalysis. Residues Asn-253 and Asp-262 each coordinate Mg(2+). Asp-262 contributes to the ATP binding site.

The protein belongs to the SELO family. Mg(2+) serves as cofactor. Mn(2+) is required as a cofactor.

The enzyme catalyses L-seryl-[protein] + ATP = 3-O-(5'-adenylyl)-L-seryl-[protein] + diphosphate. It carries out the reaction L-threonyl-[protein] + ATP = 3-O-(5'-adenylyl)-L-threonyl-[protein] + diphosphate. The catalysed reaction is L-tyrosyl-[protein] + ATP = O-(5'-adenylyl)-L-tyrosyl-[protein] + diphosphate. It catalyses the reaction L-histidyl-[protein] + UTP = N(tele)-(5'-uridylyl)-L-histidyl-[protein] + diphosphate. The enzyme catalyses L-seryl-[protein] + UTP = O-(5'-uridylyl)-L-seryl-[protein] + diphosphate. It carries out the reaction L-tyrosyl-[protein] + UTP = O-(5'-uridylyl)-L-tyrosyl-[protein] + diphosphate. In terms of biological role, nucleotidyltransferase involved in the post-translational modification of proteins. It can catalyze the addition of adenosine monophosphate (AMP) or uridine monophosphate (UMP) to a protein, resulting in modifications known as AMPylation and UMPylation. The chain is Protein nucleotidyltransferase YdiU from Pseudomonas fluorescens (strain ATCC BAA-477 / NRRL B-23932 / Pf-5).